A 455-amino-acid chain; its full sequence is GTPase Der (455 aa).

EngA-type G domains are found at residues 4–169 and 178–353; these read PVVA…PPKD and IQLS…EQHR. GTP contacts are provided by residues 10–17, 57–61, 120–123, 184–191, 231–235, and 296–299; these read GRPNVGKS, DTGGL, NKCE, DTAGI, and NKWD. The region spanning 354–439 is the KH-like domain; it reads RRVSTSVVNE…PVKLFWRGKQ (86 aa).

Belongs to the TRAFAC class TrmE-Era-EngA-EngB-Septin-like GTPase superfamily. EngA (Der) GTPase family. In terms of assembly, associates with the 50S ribosomal subunit.

In terms of biological role, GTPase that plays an essential role in the late steps of ribosome biogenesis. This Synechococcus sp. (strain CC9311) protein is GTPase Der.